The primary structure comprises 292 residues: F-box protein SKIP28 (292 aa).

The F-box; degenerate domain occupies 21-79 (LIVLPYLHSLFELLSMIRVSRSLRDAIRDETALWTKLVIEPPLSSRLTDDILSEFSSKS).

Part of a SCF (ASK-cullin-F-box) protein ligase complex. Interacts with SKP1A/ASK1 and CUL1.

The protein operates within protein modification; protein ubiquitination. Functionally, component of SCF(ASK-cullin-F-box) E3 ubiquitin ligase complexes, which may mediate the ubiquitination and subsequent proteasomal degradation of target proteins. Required during the endosperm development in embryos. This Arabidopsis thaliana (Mouse-ear cress) protein is F-box protein SKIP28 (SKIP28).